The following is an 80-amino-acid chain: Putative ATP-dependent Clp protease proteolytic subunit (80 aa).

Histidine 19 is a catalytic residue.

It belongs to the peptidase S14 family. As to quaternary structure, component of the chloroplastic Clp protease core complex.

Its subcellular location is the plastid. It is found in the chloroplast. The enzyme catalyses Hydrolysis of proteins to small peptides in the presence of ATP and magnesium. alpha-casein is the usual test substrate. In the absence of ATP, only oligopeptides shorter than five residues are hydrolyzed (such as succinyl-Leu-Tyr-|-NHMec, and Leu-Tyr-Leu-|-Tyr-Trp, in which cleavage of the -Tyr-|-Leu- and -Tyr-|-Trp bonds also occurs).. Its function is as follows. Cleaves peptides in various proteins in a process that requires ATP hydrolysis. Has a chymotrypsin-like activity. Plays a major role in the degradation of misfolded proteins. The polypeptide is Putative ATP-dependent Clp protease proteolytic subunit (Pinus strobus (Eastern white pine)).